A 513-amino-acid polypeptide reads, in one-letter code: MEEFKRYLELDRSQQHDFIYPLIFQESIYALAHDHGLNRSLLLENEGYDNKSSLLIVKRLITHLITQMYQQNRFIFSANDSNQNHFLGHNTNLYSQIILEGFAVVVEIPFSLRLISSLEGKEIVKSHNLRSIHSIFPFLEDKISHLNYVLDILIPHSIHLEILVQTLRYWVKDASSLHLLRFFLHEYRNWNSLITPNKSSFSFSKRNQRLFLFLYNFHVCEYESIFVFLRNQSSHLRSISSGTFLERIYFYRKIEHFVFVEVFTKDFQTVLWLFKDPFLHYVRYQGKSLLAAKGASLLMNKWKYYFVNFWQCYFSMWSQPRRIHINPLSNHSLDFLGYLSSMRLNPSMVRSQMLENSVLLGNAIKKFDTTVPITPLIGSLSKAKFCNVLGHPLSKPAWADLSDSDIIDRFGCIYRNLSHYHSGSLKKKSLYQIKYILRLSCARTLARKHKSTVRAFLKRLGVELLEEFFTEEEQVFYLTFPKASSPSRGLYRIYRKRVWYLDIICINDLANHS.

Belongs to the intron maturase 2 family. MatK subfamily.

It is found in the plastid. The protein localises to the chloroplast. In terms of biological role, usually encoded in the trnK tRNA gene intron. Probably assists in splicing its own and other chloroplast group II introns. The polypeptide is Maturase K (Cyrilla racemiflora (Swamp titi)).